The sequence spans 170 residues: Acetyl-CoA decarbonylase/synthase complex subunit epsilon 2 (170 aa).

It belongs to the CdhB family. Heterotetramer of two alpha and two epsilon subunits. The ACDS complex is made up of alpha, epsilon, beta, gamma and delta subunits with a probable stoichiometry of (alpha(2)epsilon(2))(4)-beta(8)-(gamma(1)delta(1))(8).

It functions in the pathway one-carbon metabolism; methanogenesis from acetate. Its function is as follows. Part of a complex that catalyzes the reversible cleavage of acetyl-CoA, allowing growth on acetate as sole source of carbon and energy. The alpha-epsilon subcomponent functions as a carbon monoxide dehydrogenase. The precise role of the epsilon subunit is unclear; it may have a stabilizing role within the alpha(2)epsilon(2) component and/or be involved in electron transfer to FAD during a potential FAD-mediated CO oxidation. This Methanosarcina thermophila protein is Acetyl-CoA decarbonylase/synthase complex subunit epsilon 2 (cdhB2).